Consider the following 336-residue polypeptide: uncharacterized protein (336 aa).

The N-terminal stretch at 1-33 (MGSAWPAEIRKIAKISKRLLGATVILGFGVAEA) is a signal peptide.

This is an uncharacterized protein from Sinorhizobium fredii (strain NBRC 101917 / NGR234).